A 543-amino-acid polypeptide reads, in one-letter code: Chaperonin GroEL (543 aa).

Residues Thr-30–Pro-33, Lys-51, Asp-87–Thr-91, Gly-415, Asp-480–Ala-482, and Asp-496 contribute to the ATP site.

This sequence belongs to the chaperonin (HSP60) family. As to quaternary structure, forms a cylinder of 14 subunits composed of two heptameric rings stacked back-to-back. Interacts with the co-chaperonin GroES.

Its subcellular location is the cytoplasm. It catalyses the reaction ATP + H2O + a folded polypeptide = ADP + phosphate + an unfolded polypeptide.. In terms of biological role, together with its co-chaperonin GroES, plays an essential role in assisting protein folding. The GroEL-GroES system forms a nano-cage that allows encapsulation of the non-native substrate proteins and provides a physical environment optimized to promote and accelerate protein folding. The sequence is that of Chaperonin GroEL from Hydrogenobaculum sp. (strain Y04AAS1).